Here is a 306-residue protein sequence, read N- to C-terminus: Oligopeptide transport system permease protein OppB (306 aa).

The Cytoplasmic segment spans residues M1–R8. Residues L9–L29 form a helical membrane-spanning segment. Topologically, residues A30–K99 are periplasmic. The region spanning F94–V293 is the ABC transmembrane type-1 domain. A helical transmembrane segment spans residues L100 to A120. Topologically, residues L121–S135 are cytoplasmic. The helical transmembrane segment at M136–I156 threads the bilayer. Over Y157–G169 the chain is Periplasmic. The chain crosses the membrane as a helical span at residues T170–A190. Residues R191–L229 lie on the Cytoplasmic side of the membrane. Residues L230 to I250 traverse the membrane as a helical segment. Topologically, residues E251 to T279 are periplasmic. Residues I280–I300 form a helical membrane-spanning segment. Residues D301 to Y306 lie on the Cytoplasmic side of the membrane.

The protein belongs to the binding-protein-dependent transport system permease family. OppBC subfamily. The complex is composed of two ATP-binding proteins (OppD and OppF), two transmembrane proteins (OppB and OppC) and a solute-binding protein (OppA).

It localises to the cell inner membrane. Part of the ABC transporter complex OppABCDF involved in the uptake of oligopeptides. Probably responsible for the translocation of the substrate across the membrane. The protein is Oligopeptide transport system permease protein OppB (oppB) of Haemophilus influenzae (strain ATCC 51907 / DSM 11121 / KW20 / Rd).